The chain runs to 313 residues: Heterogeneous nuclear ribonucleoproteins C1/C2 (313 aa).

Alanine 2 bears the N-acetylalanine mark. Residues lysine 8, lysine 50, lysine 89, and lysine 94 each participate in a glycyl lysine isopeptide (Lys-Gly) (interchain with G-Cter in SUMO2) cross-link. An RRM domain is found at 16 to 87; the sequence is SRVFIGNLNT…QVLDINLAAE (72 aa). A phosphoserine mark is found at serine 113, serine 115, and serine 121. 2 disordered regions span residues 139–191 and 219–313; these read YPAR…KLKG and EKEQ…EDDS. Residues 155–161 carry the Nuclear localization signal motif; the sequence is PSKRQRV. Residues serine 162 and serine 166 each carry the phosphoserine modification. Residues 175-186 are compositionally biased toward low complexity; sequence SKSGQRGSSSKS. At lysine 176 the chain carries N6-acetyllysine; alternate. Lysine 176 participates in a covalent cross-link: Glycyl lysine isopeptide (Lys-Gly) (interchain with G-Cter in SUMO2); alternate. The stretch at 191–226 forms a coiled coil; sequence GDDLQAIKKELTQIKQKVDSLLESLEKIEKEQSKQA. Lysine 224 is covalently cross-linked (Glycyl lysine isopeptide (Lys-Gly) (interchain with G-Cter in SUMO2)). Residues serine 229, serine 231, and serine 232 each carry the phosphoserine modification. Residue lysine 237 forms a Glycyl lysine isopeptide (Lys-Gly) (interchain with G-Cter in SUMO2) linkage. Residue lysine 240 forms a Glycyl lysine isopeptide (Lys-Gly) (interchain with G-Cter in SUMO2); alternate linkage. Residue lysine 240 forms a Glycyl lysine isopeptide (Lys-Gly) (interchain with G-Cter in SUMO1); alternate linkage. Serine 241, serine 246, serine 247, and serine 249 each carry phosphoserine. Positions 250–261 are enriched in basic and acidic residues; sequence VKKDETNVKMES. Residues lysine 251 and lysine 252 each participate in a glycyl lysine isopeptide (Lys-Gly) (interchain with G-Cter in SUMO2) cross-link. A Glycyl lysine isopeptide (Lys-Gly) (interchain with G-Cter in SUMO2); alternate cross-link involves residue lysine 258. Lysine 258 participates in a covalent cross-link: Glycyl lysine isopeptide (Lys-Gly) (interchain with G-Cter in SUMO); alternate. Serine 261 and serine 268 each carry phosphoserine. Positions 263–284 are enriched in acidic residues; that stretch reads AGADDSAEEGDLLDDDDNEDRG. A compositionally biased stretch (basic and acidic residues) spans 285 to 294; it reads DDQLELKDDE. The segment covering 295-313 has biased composition (acidic residues); that stretch reads KEPEEGEDDRDSANGEDDS. Serine 306 and serine 313 each carry phosphoserine.

This sequence belongs to the RRM HNRPC family. RALY subfamily. In terms of assembly, tetramer composed of 3 copies of isoform C1 and 1 copy of isoform C2. Assembly of 3 tetramers with bound pre-mRNA gives rise to a 19S complex that interacts with HNRNPA2B1 tetramers. Component of the 40S hnRNP particle. Identified in the spliceosome C complex. Interacts with IGF2BP1. Interacts with DHX9; this interaction is direct, enhanced probably by their concomitant binding to RNA and mediates the attachment to actin filaments. Interacts with PPIA/CYPA. In terms of processing, phosphorylated on Ser-268 and Ser-306 in resting cells. Post-translationally, sumoylated. Sumoylation reduces affinity for mRNA. Ubiquitinated and degraded after nucleo-cytoplasmic transport by YWHAE.

The protein resides in the nucleus. In terms of biological role, binds pre-mRNA and nucleates the assembly of 40S hnRNP particles. Interacts with poly-U tracts in the 3'-UTR or 5'-UTR of mRNA and modulates the stability and the level of translation of bound mRNA molecules. Single HNRNPC tetramers bind 230-240 nucleotides. Trimers of HNRNPC tetramers bind 700 nucleotides. May play a role in the early steps of spliceosome assembly and pre-mRNA splicing. N6-methyladenosine (m6A) has been shown to alter the local structure in mRNAs and long non-coding RNAs (lncRNAs) via a mechanism named 'm(6)A-switch', facilitating binding of HNRNPC, leading to regulation of mRNA splicing. This is Heterogeneous nuclear ribonucleoproteins C1/C2 (Hnrnpc) from Mus musculus (Mouse).